The primary structure comprises 318 residues: NLP effector protein 7 (318 aa).

A signal peptide spans 1–19 (MRLFAFLWSSVAFLSTVQA). The segment covering 23–41 (QTASQTQDDSSTPTPTPTD) has biased composition (low complexity). 2 disordered regions span residues 23–42 (QTAS…PTDK) and 51–96 (RTKT…TPDP). Positions 55–65 (PMATPNRTIMP) are enriched in polar residues. An N-linked (GlcNAc...) asparagine glycan is attached at asparagine 60. A compositionally biased stretch (pro residues) spans 73–96 (TEPPTPEPTYLPTPSPTPAPTPDP). Residues 185 to 195 (AIMYSWYFPKD) carry the Conserved undecapeptide motif I motif. The short motif at 202-208 (GHRHDWE) is the Hepta-peptide GHRHDWE motif II element.

Belongs to the Necrosis inducing protein (NPP1) family.

The protein localises to the secreted. In terms of biological role, secreted effector that contributes moderately to virulence during infection by P.capsici. Does not cause visible reaction of C.annuum for several days after inoculation, but by 7 days after inoculation, small necrotic lesions become visible. Leads only to chlorotic areas, without necrosis at 7 days after non-host N.benthamiana leaves infection. This is NLP effector protein 7 from Phytophthora capsici.